The primary structure comprises 218 residues: UPF0319 protein PM0395 (218 aa).

The N-terminal stretch at 1–21 is a signal peptide; it reads MKFRFAALASVALLTSTVSVA.

It belongs to the UPF0319 family.

The protein is UPF0319 protein PM0395 of Pasteurella multocida (strain Pm70).